The sequence spans 430 residues: Ribosomal protein uS12 methylthiotransferase RimO (430 aa).

One can recognise an MTTase N-terminal domain in the interval 4 to 119; sequence LKINFISLGC…IPVLFDIKPK (116 aa). Residues C13, C49, C82, C141, C145, and C148 each contribute to the [4Fe-4S] cluster site. Positions 127 to 358 constitute a Radical SAM core domain; it reads STPKHTAYLK…SALQENITEQ (232 aa). The TRAM domain occupies 361–430; sequence KSLIGKELDI…DKYDVVGEAE (70 aa).

Belongs to the methylthiotransferase family. RimO subfamily. [4Fe-4S] cluster serves as cofactor.

Its subcellular location is the cytoplasm. The enzyme catalyses L-aspartate(89)-[ribosomal protein uS12]-hydrogen + (sulfur carrier)-SH + AH2 + 2 S-adenosyl-L-methionine = 3-methylsulfanyl-L-aspartate(89)-[ribosomal protein uS12]-hydrogen + (sulfur carrier)-H + 5'-deoxyadenosine + L-methionine + A + S-adenosyl-L-homocysteine + 2 H(+). Functionally, catalyzes the methylthiolation of an aspartic acid residue of ribosomal protein uS12. This is Ribosomal protein uS12 methylthiotransferase RimO from Sulfurihydrogenibium sp. (strain YO3AOP1).